A 95-amino-acid polypeptide reads, in one-letter code: Co-chaperonin GroES (95 aa).

It belongs to the GroES chaperonin family. Heptamer of 7 subunits arranged in a ring. Interacts with the chaperonin GroEL.

It is found in the cytoplasm. Functionally, together with the chaperonin GroEL, plays an essential role in assisting protein folding. The GroEL-GroES system forms a nano-cage that allows encapsulation of the non-native substrate proteins and provides a physical environment optimized to promote and accelerate protein folding. GroES binds to the apical surface of the GroEL ring, thereby capping the opening of the GroEL channel. The polypeptide is Co-chaperonin GroES (Desulforapulum autotrophicum (strain ATCC 43914 / DSM 3382 / VKM B-1955 / HRM2) (Desulfobacterium autotrophicum)).